Reading from the N-terminus, the 350-residue chain is Phenylalanine--tRNA ligase alpha subunit (350 aa).

E271 is a Mg(2+) binding site.

It belongs to the class-II aminoacyl-tRNA synthetase family. Phe-tRNA synthetase alpha subunit type 1 subfamily. As to quaternary structure, tetramer of two alpha and two beta subunits. The cofactor is Mg(2+).

The protein localises to the cytoplasm. The enzyme catalyses tRNA(Phe) + L-phenylalanine + ATP = L-phenylalanyl-tRNA(Phe) + AMP + diphosphate + H(+). This Verminephrobacter eiseniae (strain EF01-2) protein is Phenylalanine--tRNA ligase alpha subunit.